Reading from the N-terminus, the 579-residue chain is Putative truncated flagellar export/assembly protein LfhA (579 aa).

Transmembrane regions (helical) follow at residues 86-106 (AIAG…IGIF), 124-144 (IGDG…AAII), and 177-197 (FVLA…SALL).

It belongs to the FHIPEP (flagella/HR/invasion proteins export pore) family.

Its subcellular location is the cell inner membrane. The chain is Putative truncated flagellar export/assembly protein LfhA from Escherichia coli (strain K12).